The primary structure comprises 357 residues: Phospho-N-acetylmuramoyl-pentapeptide-transferase (357 aa).

Transmembrane regions (helical) follow at residues alanine 23–tyrosine 43, threonine 70–leucine 90, serine 91–isoleucine 111, leucine 127–isoleucine 147, tyrosine 171–threonine 191, glycine 196–serine 216, leucine 236–tyrosine 256, valine 260–leucine 280, leucine 286–isoleucine 306, and leucine 334–leucine 354.

The protein belongs to the glycosyltransferase 4 family. MraY subfamily. Mg(2+) serves as cofactor.

The protein resides in the cell inner membrane. It catalyses the reaction UDP-N-acetyl-alpha-D-muramoyl-L-alanyl-gamma-D-glutamyl-meso-2,6-diaminopimeloyl-D-alanyl-D-alanine + di-trans,octa-cis-undecaprenyl phosphate = di-trans,octa-cis-undecaprenyl diphospho-N-acetyl-alpha-D-muramoyl-L-alanyl-D-glutamyl-meso-2,6-diaminopimeloyl-D-alanyl-D-alanine + UMP. Its pathway is cell wall biogenesis; peptidoglycan biosynthesis. Functionally, catalyzes the initial step of the lipid cycle reactions in the biosynthesis of the cell wall peptidoglycan: transfers peptidoglycan precursor phospho-MurNAc-pentapeptide from UDP-MurNAc-pentapeptide onto the lipid carrier undecaprenyl phosphate, yielding undecaprenyl-pyrophosphoryl-MurNAc-pentapeptide, known as lipid I. This Buchnera aphidicola subsp. Acyrthosiphon pisum (strain 5A) protein is Phospho-N-acetylmuramoyl-pentapeptide-transferase.